Here is a 149-residue protein sequence, read N- to C-terminus: Transcriptional repressor NrdR (149 aa).

The segment at 3 to 34 (CPFCSAVDTKVIDSRLVAEGHQVRRRRECLLC) is a zinc-finger region. The ATP-cone domain maps to 49–139 (PRVIKSNGSR…VYRSFEDIRE (91 aa)).

It belongs to the NrdR family. The cofactor is Zn(2+).

Negatively regulates transcription of bacterial ribonucleotide reductase nrd genes and operons by binding to NrdR-boxes. This Aeromonas hydrophila subsp. hydrophila (strain ATCC 7966 / DSM 30187 / BCRC 13018 / CCUG 14551 / JCM 1027 / KCTC 2358 / NCIMB 9240 / NCTC 8049) protein is Transcriptional repressor NrdR.